The following is a 616-amino-acid chain: TAF6-like RNA polymerase II p300/CBP-associated factor-associated factor 65 kDa subunit 6L (616 aa).

Disordered regions lie at residues 399 to 432 (SLLL…EDPS) and 455 to 539 (FGTG…GTRD). Phosphoserine occurs at positions 494 and 500. Arg-549, Arg-555, and Arg-587 each carry asymmetric dimethylarginine.

The protein belongs to the TAF6 family. In terms of assembly, the PCAF complex is composed of a number of TBP-associated factors (TAFS), such as TAF5, TAF5L, TAF6, TAF6L, TAF9, TAF10 and TAF12, PCAF, and also PCAF-associated factors (PAFs), such as TADA2L/ADA2, TADA3L/ADA3 and SPT3. Component of the STAGA transcription coactivator-HAT complex, at least composed of SUPT3H, GCN5L2, TAF5L, TAF6L, SUPT7L, TADA3L, TAD1L, TAF10, TAF12, TRRAP and TAF9.

It localises to the nucleus. Its function is as follows. Functions as a component of the PCAF complex. The PCAF complex is capable of efficiently acetylating histones in a nucleosomal context. The PCAF complex could be considered as the human version of the yeast SAGA complex. With TAF5L, acts as an epigenetic regulator essential for somatic reprogramming. Regulates target genes through H3K9ac deposition and MYC recruitment which trigger MYC regulatory network to orchestrate gene expression programs to control embryonic stem cell state. Functions with MYC to activate target gene expression through RNA polymerase II pause release. In Mus musculus (Mouse), this protein is TAF6-like RNA polymerase II p300/CBP-associated factor-associated factor 65 kDa subunit 6L.